The sequence spans 309 residues: Probable cell wall protein PGA50 (309 aa).

An N-terminal signal peptide occupies residues 1 to 17; that stretch reads MKLNLLLLLFIVELVAA. Asn67, Asn115, Asn248, Asn267, and Asn277 each carry an N-linked (GlcNAc...) asparagine glycan. The tract at residues 241–281 is disordered; that stretch reads STTTFSSNGTSSGTTNGDTRAETKSSNSTQTSSSDKNSSQI. Ser286 is lipidated: GPI-anchor amidated serine. Residues 287-309 constitute a propeptide, removed in mature form; sequence TGVANFVASFGMGTLLLFVLSLC.

Belongs to the IHD1 family. Post-translationally, the GPI-anchor is attached to the protein in the endoplasmic reticulum and serves to target the protein to the cell surface. There, the glucosamine-inositol phospholipid moiety is cleaved off and the GPI-modified mannoprotein is covalently attached via its lipidless GPI glycan remnant to the 1,6-beta-glucan of the outer cell wall layer.

Its subcellular location is the secreted. The protein localises to the cell wall. The protein resides in the membrane. Functionally, probable GPI-anchored cell wall protein that may be involved in cell wall organization, hyphal growth, as well as in virulence. The polypeptide is Probable cell wall protein PGA50 (PGA50) (Candida albicans (strain SC5314 / ATCC MYA-2876) (Yeast)).